The chain runs to 92 residues: Small ribosomal subunit protein uS19 (92 aa).

It belongs to the universal ribosomal protein uS19 family.

In terms of biological role, protein S19 forms a complex with S13 that binds strongly to the 16S ribosomal RNA. This Lactococcus lactis subsp. lactis (strain IL1403) (Streptococcus lactis) protein is Small ribosomal subunit protein uS19.